Reading from the N-terminus, the 370-residue chain is MHRLIFVYTLICANFCSCRDTSATPQSASIKALRNANLRRDESNHLTDLYRRDETIQVKGNGYVQSPRFPNSYPRNLLLTWRLHSQENTRIQLVFDNQFGLEEAENDICRYDFVEVEDISETSTIIRGRWCGHKEVPPRIKSRTNQIKITFKSDDYFVAKPGFKIYYSLLEDFQPAAASETNWESVTSSISGVSYNSPSVTDPTLIADALDKKIAEFDTVEDLLKYFNPESWQEDLENMYLDTPRYRGRSYHDRKSKVDLDRLNDDAKRYSCTPRNYSVNIREELKLANVVFFPRCLLVQRCGGNCGCGTVNWRSCTCNSGKTVKKYHEVLQFEPGHIKRRGRAKTMALVDIQLDHHERCDCICSSRPPR.

The N-terminal stretch at 1 to 18 is a signal peptide; that stretch reads MHRLIFVYTLICANFCSC. A CUB domain is found at 52–170; that stretch reads RDETIQVKGN…PGFKIYYSLL (119 aa). Cys-109 and Cys-131 are oxidised to a cystine. Asn-276 carries N-linked (GlcNAc...) asparagine glycosylation. Intrachain disulfides connect Cys-302–Cys-360 and Cys-306–Cys-362.

This sequence belongs to the PDGF/VEGF growth factor family. Homodimer; disulfide-linked. Interacts with PDGFRB homodimers, and with heterodimers formed by PDGFRA and PDGFRB. Post-translationally, activated by proteolytic cleavage. Proteolytic removal of the N-terminal CUB domain releasing the core domain is necessary for unmasking the receptor-binding epitopes of the core domain. Cleavage after Arg-247 or Arg-249 by urokinase plasminogen activator gives rise to the active form. As to expression, expressed at high levels in the heart, pancreas, adrenal gland and ovary and at low levels in placenta, liver, kidney, prostate, testis, small intestine, spleen and colon. In the kidney, expressed by the visceral epithelial cells of the glomeruli. A widespread expression is also seen in the medial smooth muscle cells of arteries and arterioles, as well as in smooth muscle cells of vasa rectae in the medullary area. Expressed in the adventitial connective tissue surrounding the suprarenal artery. In chronic obstructive nephropathy, a persistent expression is seen in glomerular visceral epithelial cells and vascular smooth muscle cells, as well as de novo expression by periglomerular interstitial cells and by some neointimal cells of atherosclerotic vessels. Expression in normal prostate is seen preferentially in the mesenchyme of the gland while expression is increased and more profuse in prostate carcinoma. Expressed in many ovarian, lung, renal and brain cancer-derived cell lines.

The protein localises to the secreted. Growth factor that plays an essential role in the regulation of embryonic development, cell proliferation, cell migration, survival and chemotaxis. Potent mitogen for cells of mesenchymal origin. Plays an important role in wound healing. Induces macrophage recruitment, increased interstitial pressure, and blood vessel maturation during angiogenesis. Can initiate events that lead to a mesangial proliferative glomerulonephritis, including influx of monocytes and macrophages and production of extracellular matrix. This is Platelet-derived growth factor D (PDGFD) from Homo sapiens (Human).